Consider the following 342-residue polypeptide: MNTADFDFHLPEELIAQTPLEKRDASRLLVVDRSSGEFSDQHFDSIIDQLQPGDALVMNNTRVLPARLYGEKPGTGGHVELLLLKNTEGDQWEVLAKPAKRLKVGAQVSFGDGRLTATVVDELEHGGRIVRFDYQGIFLEVLESLGEMPLPPYIHEKLADRERYQTVYAKENGSAAAPTAGLHFTKELLAQIEAKGVKLVYLTLHVGLGTFRPVSVDNLDDHEMHSEFYTLSEEAAATLREVKANGHRVIAVGTTSIRTLETIGNKFKGDIQADSGWTNIFIKPGYQWQIVDAFSTNFHLPKSTLVMLVSAFAGRDLTLKAYEHAIAERYRFFSFGDAMFIK.

It belongs to the QueA family. Monomer.

It is found in the cytoplasm. The catalysed reaction is 7-aminomethyl-7-carbaguanosine(34) in tRNA + S-adenosyl-L-methionine = epoxyqueuosine(34) in tRNA + adenine + L-methionine + 2 H(+). It functions in the pathway tRNA modification; tRNA-queuosine biosynthesis. In terms of biological role, transfers and isomerizes the ribose moiety from AdoMet to the 7-aminomethyl group of 7-deazaguanine (preQ1-tRNA) to give epoxyqueuosine (oQ-tRNA). Seems to have a role in modulation of ADS (arginine deiminase system) gene expression, perhaps exerting a negative effect on the translation of arc regulatory proteins. The chain is S-adenosylmethionine:tRNA ribosyltransferase-isomerase (queA) from Streptococcus gordonii (strain Challis / ATCC 35105 / BCRC 15272 / CH1 / DL1 / V288).